A 298-amino-acid polypeptide reads, in one-letter code: Protease HtpX homolog (298 aa).

A run of 2 helical transmembrane segments spans residues 15 to 35 (YVMIGFAILVLFIGAAVGYVF) and 39 to 59 (AMAGIIMAAVIAAIYMAMMIA). H143 contributes to the Zn(2+) binding site. Residue E144 is part of the active site. A Zn(2+)-binding site is contributed by H147. 2 helical membrane passes run 158-178 (IALALSSAIAMLVNIGMRSFW) and 197-217 (IVMMIISIVLVILGPIATTIA). E226 provides a ligand contact to Zn(2+).

It belongs to the peptidase M48B family. Zn(2+) is required as a cofactor.

The protein resides in the cell membrane. The chain is Protease HtpX homolog from Pediococcus pentosaceus (strain ATCC 25745 / CCUG 21536 / LMG 10740 / 183-1w).